A 43-amino-acid chain; its full sequence is Myotoxin-1 (43 aa).

Intrachain disulfides connect C4-C36, C11-C30, and C18-C37.

This sequence belongs to the crotamine-myotoxin family. Monomer. As to expression, expressed by the venom gland.

Its subcellular location is the secreted. Functionally, cationic peptide that possesses multiple functions. It acts as a cell-penetrating peptide (CPP), and as a potent voltage-gated potassium channel (Kv) inhibitor. It exhibits antimicrobial activities, hind limb paralysis, and severe muscle necrosis by a non-enzymatic mechanism. The polypeptide is Myotoxin-1 (Crotalus concolor (Midget faded rattlesnake)).